A 1001-amino-acid polypeptide reads, in one-letter code: O-GlcNAcase NagJ (1001 aa).

Residues 1–30 (MKRKMLKRLLTSAFACMFIANGLITTTVRA) form the signal peptide. Positions 179–469 (VSARGIVEGF…WNRAIDMLYG (291 aa)) are catalytic domain. One can recognise a GH84 domain in the interval 180–452 (SARGIVEGFY…TAADYSWNMD (273 aa)). A protein contacts are provided by glycine 187, lysine 218, and aspartate 297. The active-site Proton donor is the aspartate 298. A protein contacts are provided by residues tyrosine 335, 394–396 (WWN), aspartate 401, and asparagine 429. Coiled-coil stretches lie at residues 515–543 (KEDA…KANL) and 573–597 (VAQL…LNTA). The Fibronectin type-III domain occupies 916–1001 (PVRDFKASEI…KESLTLRTAR (86 aa)).

This sequence belongs to the glycosyl hydrolase 84 family.

The enzyme catalyses 3-O-(N-acetyl-beta-D-glucosaminyl)-L-seryl-[protein] + H2O = N-acetyl-D-glucosamine + L-seryl-[protein]. The catalysed reaction is 3-O-(N-acetyl-beta-D-glucosaminyl)-L-threonyl-[protein] + H2O = L-threonyl-[protein] + N-acetyl-D-glucosamine. Inhibited by O-(2-acetamido-2-deoxy-D-glucopyranosylidene)amino-N-phenyl-carbamate (PUGNAc) and streptozotocin. Functionally, binds carbohydrates. Capable of hydrolyzing the glycosidic link of O-GlcNAcylated proteins. Can bind and deglycosylate O-glycosylated peptides from mammals. The polypeptide is O-GlcNAcase NagJ (nagJ) (Clostridium perfringens (strain ATCC 13124 / DSM 756 / JCM 1290 / NCIMB 6125 / NCTC 8237 / Type A)).